A 132-amino-acid polypeptide reads, in one-letter code: DNA-directed RNA polymerase subunit omega (132 aa).

Residues 89 to 109 form a disordered region; sequence HSSESESIFNTSSQEEGTSFD. The span at 96 to 105 shows a compositional bias: polar residues; it reads IFNTSSQEEG.

It belongs to the RNA polymerase subunit omega family. The RNAP catalytic core consists of 2 alpha, 1 beta, 1 beta' and 1 omega subunit. When a sigma factor is associated with the core the holoenzyme is formed, which can initiate transcription.

It carries out the reaction RNA(n) + a ribonucleoside 5'-triphosphate = RNA(n+1) + diphosphate. Functionally, promotes RNA polymerase assembly. Latches the N- and C-terminal regions of the beta' subunit thereby facilitating its interaction with the beta and alpha subunits. This Bartonella tribocorum (strain CIP 105476 / IBS 506) protein is DNA-directed RNA polymerase subunit omega.